The chain runs to 162 residues: Nucleotide-binding protein CHU_2278 (162 aa).

Belongs to the YajQ family.

Its function is as follows. Nucleotide-binding protein. The chain is Nucleotide-binding protein CHU_2278 from Cytophaga hutchinsonii (strain ATCC 33406 / DSM 1761 / CIP 103989 / NBRC 15051 / NCIMB 9469 / D465).